Consider the following 242-residue polypeptide: Small ribosomal subunit protein uS3 (242 aa).

The 71-residue stretch at 39–109 (IRQYVEKNLA…QIRINVIEVA (71 aa)) folds into the KH type-2 domain. The tract at residues 220-242 (VPAQAPRRQQRRRQQFEDRSSEG) is disordered. A compositionally biased stretch (basic and acidic residues) spans 233 to 242 (QQFEDRSSEG).

It belongs to the universal ribosomal protein uS3 family. In terms of assembly, part of the 30S ribosomal subunit. Forms a tight complex with proteins S10 and S14.

Its function is as follows. Binds the lower part of the 30S subunit head. Binds mRNA in the 70S ribosome, positioning it for translation. In Microcystis aeruginosa (strain NIES-843 / IAM M-2473), this protein is Small ribosomal subunit protein uS3.